The chain runs to 272 residues: Dermonecrotic toxin SpeSicTox-betaIB2b (272 aa).

Residue histidine 5 is part of the active site. Residues glutamate 25 and aspartate 27 each coordinate Mg(2+). Histidine 41 serves as the catalytic Nucleophile. 2 disulfide bridges follow: cysteine 45–cysteine 51 and cysteine 47–cysteine 191. Mg(2+) is bound at residue aspartate 85.

The protein belongs to the arthropod phospholipase D family. Class II subfamily. Requires Mg(2+) as cofactor. In terms of tissue distribution, expressed by the venom gland.

It localises to the secreted. It carries out the reaction an N-(acyl)-sphingosylphosphocholine = an N-(acyl)-sphingosyl-1,3-cyclic phosphate + choline. It catalyses the reaction an N-(acyl)-sphingosylphosphoethanolamine = an N-(acyl)-sphingosyl-1,3-cyclic phosphate + ethanolamine. The enzyme catalyses a 1-acyl-sn-glycero-3-phosphocholine = a 1-acyl-sn-glycero-2,3-cyclic phosphate + choline. The catalysed reaction is a 1-acyl-sn-glycero-3-phosphoethanolamine = a 1-acyl-sn-glycero-2,3-cyclic phosphate + ethanolamine. Its function is as follows. Dermonecrotic toxins cleave the phosphodiester linkage between the phosphate and headgroup of certain phospholipids (sphingolipid and lysolipid substrates), forming an alcohol (often choline) and a cyclic phosphate. This toxin acts on sphingomyelin (SM). It may also act on ceramide phosphoethanolamine (CPE), lysophosphatidylcholine (LPC) and lysophosphatidylethanolamine (LPE), but not on lysophosphatidylserine (LPS), and lysophosphatidylglycerol (LPG). It acts by transphosphatidylation, releasing exclusively cyclic phosphate products as second products. Induces dermonecrosis, hemolysis, increased vascular permeability, edema, inflammatory response, and platelet aggregation. The polypeptide is Dermonecrotic toxin SpeSicTox-betaIB2b (Sicarius peruensis (Six-eyed sand spider)).